We begin with the raw amino-acid sequence, 614 residues long: MDRKVAVHEDGYPVVSWVPEEGEMMDQKGKDQVKDRGQWTNKMEFVLSVAGEIIGLGNVWRFPYLCYKNGGGAFFIPYFIFFFSCGIPVFFLEVALGQYSSQGSVTAWRKICPLLQGIGMASVVIESYLNIYYIIILAWALFYLFSSFTWELPWTTCTNSWNTEHCVDFLNHSSARGVSSSENFTSPVMEFWERRVLGITSGIHDLGSLRWELALCLLLAWIICYFCIWKGVKSTGKVVYFTATFPYLMLIILLIRGVTLPGAYQGIVFYLKPDLLRLKDPQVWMDAGTQIFFSFAICQGCLTALGSYNKYHNNCYRDSIALCFLNSATSFVAGFVVFSILGFMSQEQGIPISEVAESGPGLAFIAFPKAVTMMPLSQLWSCLFFIMLLFLGLDSQFVCMECLVTASMDMFPQQLRKSGRRDVLILAISVLCYLMGLLLVTEGGMYIFQLFDYYASSGICLLFLSLFEVICIGWVYGADRFYDNVEDMIGYRPWPLVKISWLFLTPGLCLATFFFSLSKYTPLKYNNVYMYPSWGYSIGWLLAFSSMACVPLFIIITFLKTQGSFKKRLRRLITPDPSLPQPGRRPPQDGSSAQNCSSSPAKQELIAWEKETHL.

The Cytoplasmic segment spans residues 1–44 (MDRKVAVHEDGYPVVSWVPEEGEMMDQKGKDQVKDRGQWTNKME). The next 3 membrane-spanning stretches (helical) occupy residues 45-65 (FVLS…FPYL), 73-92 (AFFI…VFFL), and 117-137 (GIGM…IIIL). Residues 138-210 (AWALFYLFSS…SGIHDLGSLR (73 aa)) are Extracellular-facing. Cysteines 157 and 166 form a disulfide. Residues Asn171 and Asn183 are each glycosylated (N-linked (GlcNAc...) asparagine). The next 9 membrane-spanning stretches (helical) occupy residues 211–229 (WELA…FCIW), 238–255 (VVYF…ILLI), 291–308 (IFFS…LGSY), 320–341 (IALC…FSIL), 374–393 (MPLS…FLGL), 423–441 (VLIL…LLVT), 458–478 (GICL…VYGA), 499–518 (ISWL…FSLS), and 538–556 (IGWL…FIII). Topologically, residues 557 to 614 (TFLKTQGSFKKRLRRLITPDPSLPQPGRRPPQDGSSAQNCSSSPAKQELIAWEKETHL) are cytoplasmic. Residues 574 to 602 (TPDPSLPQPGRRPPQDGSSAQNCSSSPAK) form a disordered region. The segment covering 589–601 (DGSSAQNCSSSPA) has biased composition (polar residues).

This sequence belongs to the sodium:neurotransmitter symporter (SNF) (TC 2.A.22) family. SLC6A12 subfamily. Interacts with LIN7C. As to expression, predominantly expressed in the liver (sinusoidal hepatocyte plasma membranes), also present in the renal medulla, where it localizes to the basolateral membranes of collecting ducts (particularly at the papilla tip) and the thick ascending limbs of Henle (at protein level). Some expression is detected in the leptomeninges, but no expression is detected in brain parenchyma, brain blood vessels, ependymal cells, the renal cortex and the intestine.

Its subcellular location is the basolateral cell membrane. It localises to the cell membrane. It catalyses the reaction 4-aminobutanoate(out) + chloride(out) + 3 Na(+)(out) = 4-aminobutanoate(in) + chloride(in) + 3 Na(+)(in). The enzyme catalyses glycine betaine(out) + 2 chloride(out) + 3 Na(+)(out) = glycine betaine(in) + 2 chloride(in) + 3 Na(+)(in). Functionally, transporter that mediates cellular uptake of betaine and GABA in a sodium- and chloride-dependent process. May have a role in regulation of GABAergic transmission in the brain through the reuptake of GABA into presynaptic terminals, as well as in osmotic regulation. Probably also involved in renal and hepatic osmotic regulation. This is Sodium- and chloride-dependent betaine transporter (Slc6a12) from Mus musculus (Mouse).